We begin with the raw amino-acid sequence, 206 residues long: MKKTLIIGVTGGSASGKTSVSHAILETFSNERIAMIEHDSYYKDQSHLTFEERTKTNYDHPLAFDTDYLIAQLKELQYGRAVDIPIYDYAKHTRSQETYRQEPVDVLIVEGILVLEDERLRDLMDIKIFVDTDDDVRIIRRIRRDIEERGRTLDSVITQYLDAVKPMYHQFIEPTKRYADVIIPEGVSNTVGVDIITTKIASILND.

ATP is bound at residue 11–18; that stretch reads GGSASGKT.

It belongs to the uridine kinase family.

Its subcellular location is the cytoplasm. The enzyme catalyses uridine + ATP = UMP + ADP + H(+). It catalyses the reaction cytidine + ATP = CMP + ADP + H(+). Its pathway is pyrimidine metabolism; CTP biosynthesis via salvage pathway; CTP from cytidine: step 1/3. It functions in the pathway pyrimidine metabolism; UMP biosynthesis via salvage pathway; UMP from uridine: step 1/1. This is Uridine kinase from Lactococcus lactis subsp. lactis (strain IL1403) (Streptococcus lactis).